The chain runs to 378 residues: Phospho-N-acetylmuramoyl-pentapeptide-transferase (378 aa).

The next 11 membrane-spanning stretches (helical) occupy residues 26–46 (LFRLLAIGLLIVTIAYDTGAN), 57–77 (LPWLVSFALVAVLGMAVVPLL), 103–123 (MGGIFFVPTGLGLAFLWTGFA), 127–147 (LSPTVGAIALLVLWYAAIGWW), 171–191 (GIGAALFCAWLVASDPTATVV), 195–215 (WGWVWPLGMAFIPLAIFVPMA), 225–245 (GLDGLAGGTGAIALLTLGIIL), 247–267 (PYPDLQILAVVMSGACLGFLW), 275–295 (VFMGDTGSLALGAVLAGIGLA), 302–322 (LLIVSGLFFVESLSVIAQVLY), and 356–376 (IVRTFYGVVALLGLLCVLLQW).

Belongs to the glycosyltransferase 4 family. MraY subfamily. Mg(2+) serves as cofactor.

It localises to the cell inner membrane. The catalysed reaction is UDP-N-acetyl-alpha-D-muramoyl-L-alanyl-gamma-D-glutamyl-meso-2,6-diaminopimeloyl-D-alanyl-D-alanine + di-trans,octa-cis-undecaprenyl phosphate = di-trans,octa-cis-undecaprenyl diphospho-N-acetyl-alpha-D-muramoyl-L-alanyl-D-glutamyl-meso-2,6-diaminopimeloyl-D-alanyl-D-alanine + UMP. It participates in cell wall biogenesis; peptidoglycan biosynthesis. Its function is as follows. Catalyzes the initial step of the lipid cycle reactions in the biosynthesis of the cell wall peptidoglycan: transfers peptidoglycan precursor phospho-MurNAc-pentapeptide from UDP-MurNAc-pentapeptide onto the lipid carrier undecaprenyl phosphate, yielding undecaprenyl-pyrophosphoryl-MurNAc-pentapeptide, known as lipid I. The chain is Phospho-N-acetylmuramoyl-pentapeptide-transferase from Thermosynechococcus vestitus (strain NIES-2133 / IAM M-273 / BP-1).